We begin with the raw amino-acid sequence, 445 residues long: 3-phosphoshikimate 1-carboxyvinyltransferase (445 aa).

The segment at 1 to 20 is disordered; it reads MSTSAAPTPLESRASGPLSG. Residues K28, S29, and R33 each contribute to the 3-phosphoshikimate site. Residue K28 participates in phosphoenolpyruvate binding. Residues G101 and R129 each contribute to the phosphoenolpyruvate site. 4 residues coordinate 3-phosphoshikimate: S175, Q177, D328, and K355. Residue Q177 coordinates phosphoenolpyruvate. D328 serves as the catalytic Proton acceptor. Residues R359 and R402 each coordinate phosphoenolpyruvate.

The protein belongs to the EPSP synthase family. Monomer.

It is found in the cytoplasm. It catalyses the reaction 3-phosphoshikimate + phosphoenolpyruvate = 5-O-(1-carboxyvinyl)-3-phosphoshikimate + phosphate. Its pathway is metabolic intermediate biosynthesis; chorismate biosynthesis; chorismate from D-erythrose 4-phosphate and phosphoenolpyruvate: step 6/7. In terms of biological role, catalyzes the transfer of the enolpyruvyl moiety of phosphoenolpyruvate (PEP) to the 5-hydroxyl of shikimate-3-phosphate (S3P) to produce enolpyruvyl shikimate-3-phosphate and inorganic phosphate. The sequence is that of 3-phosphoshikimate 1-carboxyvinyltransferase from Bradyrhizobium sp. (strain ORS 278).